The sequence spans 328 residues: Gonadotropin-releasing hormone receptor (328 aa).

Over 1 to 38 (MANSDSPEQNENHCSAINSSIPLTPGSLPTLTLSGKIR) the chain is Extracellular. An N-linked (GlcNAc...) asparagine glycan is attached at N18. Residues 39-58 (VTVTFFLFLLSTIFNTSFLL) form a helical membrane-spanning segment. At 59-77 (KLQNWTQRKEKRKKLSRMK) the chain is on the cytoplasmic side. The chain crosses the membrane as a helical span at residues 78–97 (LLLKHLTLANLLETLIVMPL). Over 98–115 (DGMWNITVQWYAGELLCK) the chain is Extracellular. N-linked (GlcNAc...) asparagine glycosylation occurs at N102. C114 and C196 form a disulfide bridge. Residues 116–137 (VLSYLKLFSMYAPAFMMVVISL) traverse the membrane as a helical segment. The Cytoplasmic portion of the chain corresponds to 138–164 (DRSLAITKPLAVKSNSKLGQFMIGLAW). Residues 165–184 (LLSSIFAGPQLYIFGMIHLA) form a helical membrane-spanning segment. The Extracellular segment spans residues 185 to 212 (DDSGQTEGFSQCVTHCSFPQWWHQAFYN). Residues 213 to 232 (FFTFSCLFIIPLLIMVICNA) form a helical membrane-spanning segment. Topologically, residues 233-281 (KIIFTLTRVLHQDPHKLQLNQSKNNIPRARLRTLKMTVAFATSFTVCWT) are cytoplasmic. A helical transmembrane segment spans residues 282-300 (PYYVLGIWYWFDPDMVNRV). Topologically, residues 301 to 306 (SDPVNH) are extracellular. Residues 307–326 (FFFLFAFLNPCFDPLIYGYF) traverse the membrane as a helical segment. The Cytoplasmic portion of the chain corresponds to 327–328 (SL).

The protein belongs to the G-protein coupled receptor 1 family.

It localises to the cell membrane. Receptor for gonadotropin releasing hormone (GnRH) that mediates the action of GnRH to stimulate the secretion of the gonadotropic hormones luteinizing hormone (LH) and follicle-stimulating hormone (FSH). This receptor mediates its action by association with G-proteins that activate a phosphatidylinositol-calcium second messenger system. In Bos taurus (Bovine), this protein is Gonadotropin-releasing hormone receptor (GNRHR).